The following is a 276-amino-acid chain: Secreted RxLR effector protein 85 (276 aa).

The first 27 residues, 1-27 (MRYCAFRLGLFFIGYSCCVLLSTPTLA), serve as a signal peptide directing secretion. The RxLR signature appears at 110 to 113 (RQLR).

Belongs to the RxLR effector family.

Its subcellular location is the secreted. It localises to the host cell membrane. Functionally, secreted effector that partially suppresses the host cell death induced by cell death-inducing proteins. This Plasmopara viticola (Downy mildew of grapevine) protein is Secreted RxLR effector protein 85.